The sequence spans 376 residues: NAD(P)H-quinone oxidoreductase subunit 1, chloroplastic (376 aa).

The next 9 membrane-spanning stretches (helical) occupy residues 27 to 47, 65 to 85, 97 to 117, 130 to 150, 166 to 186, 251 to 271, 272 to 292, 310 to 330, and 353 to 373; these read LISI…GVLV, PEYA…KLLI, WLFS…YLVV, LGIF…LIAG, AAQS…ISLL, GIKF…SSLF, AVVL…IFFI, LIIP…FIFF, and FLLP…LTLF.

This sequence belongs to the complex I subunit 1 family. As to quaternary structure, NDH is composed of at least 16 different subunits, 5 of which are encoded in the nucleus.

It localises to the plastid. Its subcellular location is the chloroplast thylakoid membrane. It carries out the reaction a plastoquinone + NADH + (n+1) H(+)(in) = a plastoquinol + NAD(+) + n H(+)(out). It catalyses the reaction a plastoquinone + NADPH + (n+1) H(+)(in) = a plastoquinol + NADP(+) + n H(+)(out). Functionally, NDH shuttles electrons from NAD(P)H:plastoquinone, via FMN and iron-sulfur (Fe-S) centers, to quinones in the photosynthetic chain and possibly in a chloroplast respiratory chain. The immediate electron acceptor for the enzyme in this species is believed to be plastoquinone. Couples the redox reaction to proton translocation, and thus conserves the redox energy in a proton gradient. This chain is NAD(P)H-quinone oxidoreductase subunit 1, chloroplastic, found in Chara vulgaris (Common stonewort).